The following is a 340-amino-acid chain: Ferrochelatase (340 aa).

Residues H189 and E292 each contribute to the Fe cation site.

The protein belongs to the ferrochelatase family.

Its subcellular location is the cytoplasm. The catalysed reaction is heme b + 2 H(+) = protoporphyrin IX + Fe(2+). It participates in porphyrin-containing compound metabolism; protoheme biosynthesis; protoheme from protoporphyrin-IX: step 1/1. Its function is as follows. Catalyzes the ferrous insertion into protoporphyrin IX. The polypeptide is Ferrochelatase (Pseudomonas syringae pv. tomato (strain ATCC BAA-871 / DC3000)).